The following is a 323-amino-acid chain: o-succinylbenzoate synthase (323 aa).

Lys-134 acts as the Proton donor in catalysis. Asp-162, Glu-191, and Asp-214 together coordinate Mg(2+). Lys-236 serves as the catalytic Proton acceptor.

The protein belongs to the mandelate racemase/muconate lactonizing enzyme family. MenC type 1 subfamily. A divalent metal cation serves as cofactor.

The catalysed reaction is (1R,6R)-6-hydroxy-2-succinyl-cyclohexa-2,4-diene-1-carboxylate = 2-succinylbenzoate + H2O. It participates in quinol/quinone metabolism; 1,4-dihydroxy-2-naphthoate biosynthesis; 1,4-dihydroxy-2-naphthoate from chorismate: step 4/7. It functions in the pathway quinol/quinone metabolism; menaquinone biosynthesis. Functionally, converts 2-succinyl-6-hydroxy-2,4-cyclohexadiene-1-carboxylate (SHCHC) to 2-succinylbenzoate (OSB). This is o-succinylbenzoate synthase from Yersinia pseudotuberculosis serotype I (strain IP32953).